Consider the following 261-residue polypeptide: Na(+)-translocating NADH-quinone reductase subunit C (261 aa).

Residues 12–32 (LGVVIGLSLVCSIIVSTAAVG) form a helical membrane-spanning segment. Threonine 229 is modified (FMN phosphoryl threonine).

This sequence belongs to the NqrC family. In terms of assembly, composed of six subunits; NqrA, NqrB, NqrC, NqrD, NqrE and NqrF. The cofactor is FMN.

It is found in the cell inner membrane. The enzyme catalyses a ubiquinone + n Na(+)(in) + NADH + H(+) = a ubiquinol + n Na(+)(out) + NAD(+). Its function is as follows. NQR complex catalyzes the reduction of ubiquinone-1 to ubiquinol by two successive reactions, coupled with the transport of Na(+) ions from the cytoplasm to the periplasm. NqrA to NqrE are probably involved in the second step, the conversion of ubisemiquinone to ubiquinol. The protein is Na(+)-translocating NADH-quinone reductase subunit C of Vibrio parahaemolyticus serotype O3:K6 (strain RIMD 2210633).